The chain runs to 272 residues: Phosphate import ATP-binding protein PstB (272 aa).

The ABC transporter domain occupies 20–267; the sequence is VKKEVVYETN…PADQRTADYI (248 aa). 58–65 serves as a coordination point for ATP; sequence GPSGCGKS.

The protein belongs to the ABC transporter superfamily. Phosphate importer (TC 3.A.1.7) family. The complex is composed of two ATP-binding proteins (PstB), two transmembrane proteins (PstC and PstA) and a solute-binding protein (PstS).

The protein resides in the cell membrane. The enzyme catalyses phosphate(out) + ATP + H2O = ADP + 2 phosphate(in) + H(+). In terms of biological role, part of the ABC transporter complex PstSACB involved in phosphate import. Responsible for energy coupling to the transport system. This Geobacillus kaustophilus (strain HTA426) protein is Phosphate import ATP-binding protein PstB.